A 189-amino-acid polypeptide reads, in one-letter code: MSRIGKRPIPIPNKVTVDIDGATVTVKGPKGTLQRTLPTAVAINKDGETLLVTRQDDSRTARERHGLCRTLVANMVEGVATGFQKRLDIQGVGYRAQAQGSKLVLNVGYSKPVEMEMPDGVSVAVENSTQVIVSGIDKEAVGNTAAKIREVRPPEPYKGKGIRYLGEVVRRKVGKAGGKGAKGGKGGKK.

The protein belongs to the universal ribosomal protein uL6 family. In terms of assembly, part of the 50S ribosomal subunit.

This protein binds to the 23S rRNA, and is important in its secondary structure. It is located near the subunit interface in the base of the L7/L12 stalk, and near the tRNA binding site of the peptidyltransferase center. This chain is Large ribosomal subunit protein uL6, found in Microcystis aeruginosa (strain NIES-843 / IAM M-2473).